A 440-amino-acid chain; its full sequence is Histidinol dehydrogenase (440 aa).

NAD(+) contacts are provided by Y134, Q196, and N219. Positions 242, 264, and 267 each coordinate substrate. Residues Q264 and H267 each contribute to the Zn(2+) site. Residues E332 and H333 each act as proton acceptor in the active site. Substrate is bound by residues H333, D366, E420, and H425. Zn(2+) is bound at residue D366. Residue H425 coordinates Zn(2+).

Belongs to the histidinol dehydrogenase family. Requires Zn(2+) as cofactor.

It catalyses the reaction L-histidinol + 2 NAD(+) + H2O = L-histidine + 2 NADH + 3 H(+). It functions in the pathway amino-acid biosynthesis; L-histidine biosynthesis; L-histidine from 5-phospho-alpha-D-ribose 1-diphosphate: step 9/9. In terms of biological role, catalyzes the sequential NAD-dependent oxidations of L-histidinol to L-histidinaldehyde and then to L-histidine. In Prochlorococcus marinus (strain SARG / CCMP1375 / SS120), this protein is Histidinol dehydrogenase.